The sequence spans 181 residues: uncharacterized protein (181 aa).

The Cytoplasmic segment spans residues 1–14; sequence MQKCIMRSTEFKTH. Residues 15 to 35 form a helical membrane-spanning segment; it reads FSFHSIFSFPLSAALLALISA. Topologically, residues 36-58 are extracellular; the sequence is SEPASKAFINVQFISSPLVKKEV. The chain crosses the membrane as a helical span at residues 59–79; that stretch reads LPFIVSFHSLSSNGILSFSPF. The Cytoplasmic segment spans residues 80–84; that stretch reads TSSNL. The chain crosses the membrane as a helical span at residues 85-105; it reads SIAQLPFLIKVPLLSMGSLAL. Topologically, residues 106 to 116 are extracellular; sequence ENFNKFIPRAD. A helical membrane pass occupies residues 117 to 137; sequence LVAAWVTIIMVFTFGNFLSTL. Residues 138–153 lie on the Cytoplasmic side of the membrane; sequence SIKTGQNLWHLSKISS. Residues 154–174 form a helical membrane-spanning segment; that stretch reads SVSPLLLGIILGSQSGEIMLG. The Extracellular portion of the chain corresponds to 175 to 181; that stretch reads KNLLITS.

Its subcellular location is the membrane. This is an uncharacterized protein from Saccharomyces cerevisiae (strain ATCC 204508 / S288c) (Baker's yeast).